The sequence spans 248 residues: Transcription factor cicD (248 aa).

The span at 1–22 (MVGSRHPDQCAKRWHHSLDPNV) shows a compositional bias: basic and acidic residues. The tract at residues 1 to 25 (MVGSRHPDQCAKRWHHSLDPNVKRG) is disordered. In terms of domain architecture, HTH myb-type spans 19–74 (DPNVKRGPWTMEEDSSLLEAVQKIGRDWKEIGRELFPSRSTTDIKNRYVILSRRRG). Positions 46 to 70 (WKEIGRELFPSRSTTDIKNRYVILS) form a DNA-binding region, H-T-H motif. Positions 186–208 (SELEGSFTSRNHEEPPQPLPVPD) are disordered.

Its subcellular location is the nucleus. In terms of biological role, transcription factor that regulates the expression of the gene cluster that mediates the biosynthesis of cichorine, a phytotoxin active against knapweed, corn, and soybeans. The protein is Transcription factor cicD of Emericella nidulans (strain FGSC A4 / ATCC 38163 / CBS 112.46 / NRRL 194 / M139) (Aspergillus nidulans).